The chain runs to 344 residues: Glucan endo-1,3-beta-glucosidase (344 aa).

The N-terminal stretch at 1-27 (MALTRNRPFVVVLLLGFVIMSTITIGA) is a signal peptide. The active-site Proton donor is the glutamate 123. The Nucleophile role is filled by glutamate 268.

This sequence belongs to the glycosyl hydrolase 17 family.

The catalysed reaction is Hydrolysis of (1-&gt;3)-beta-D-glucosidic linkages in (1-&gt;3)-beta-D-glucans.. Functionally, implicated in the defense of plants against pathogens. The polypeptide is Glucan endo-1,3-beta-glucosidase (Vitis vinifera (Grape)).